Reading from the N-terminus, the 366-residue chain is Glutamate 5-kinase (366 aa).

Lys17 contacts ATP. Substrate contacts are provided by Ser57, Asp144, and Asn156. Residues 176-177 (SD) and 216-222 (TGGMASK) each bind ATP. The 75-residue stretch at 278–352 (QGILHIDEGA…GKSTQELPAE (75 aa)) folds into the PUA domain.

Belongs to the glutamate 5-kinase family.

It localises to the cytoplasm. The catalysed reaction is L-glutamate + ATP = L-glutamyl 5-phosphate + ADP. The protein operates within amino-acid biosynthesis; L-proline biosynthesis; L-glutamate 5-semialdehyde from L-glutamate: step 1/2. Catalyzes the transfer of a phosphate group to glutamate to form L-glutamate 5-phosphate. The sequence is that of Glutamate 5-kinase from Rhodococcus jostii (strain RHA1).